Reading from the N-terminus, the 197-residue chain is 3-isopropylmalate dehydratase small subunit (197 aa).

Belongs to the LeuD family. LeuD type 1 subfamily. As to quaternary structure, heterodimer of LeuC and LeuD.

It catalyses the reaction (2R,3S)-3-isopropylmalate = (2S)-2-isopropylmalate. Its pathway is amino-acid biosynthesis; L-leucine biosynthesis; L-leucine from 3-methyl-2-oxobutanoate: step 2/4. Its function is as follows. Catalyzes the isomerization between 2-isopropylmalate and 3-isopropylmalate, via the formation of 2-isopropylmaleate. This chain is 3-isopropylmalate dehydratase small subunit, found in Streptomyces griseus subsp. griseus (strain JCM 4626 / CBS 651.72 / NBRC 13350 / KCC S-0626 / ISP 5235).